Consider the following 336-residue polypeptide: Ketol-acid reductoisomerase (NADP(+)) 1 (336 aa).

A KARI N-terminal Rossmann domain is found at 2 to 181 (AKVYYEKDVT…GATRAGVLET (180 aa)). NADP(+) contacts are provided by residues 25-28 (YGSQ), Arg-48, Ser-52, and 82-85 (DELQ). His-107 is an active-site residue. NADP(+) is bound at residue Gly-133. Residues 182-327 (TFKEETETDL…RKLREMMPFV (146 aa)) enclose the KARI C-terminal knotted domain. Asp-190, Glu-194, Glu-226, and Glu-230 together coordinate Mg(2+). Ser-251 provides a ligand contact to substrate.

It belongs to the ketol-acid reductoisomerase family. Mg(2+) serves as cofactor.

It carries out the reaction (2R)-2,3-dihydroxy-3-methylbutanoate + NADP(+) = (2S)-2-acetolactate + NADPH + H(+). It catalyses the reaction (2R,3R)-2,3-dihydroxy-3-methylpentanoate + NADP(+) = (S)-2-ethyl-2-hydroxy-3-oxobutanoate + NADPH + H(+). It participates in amino-acid biosynthesis; L-isoleucine biosynthesis; L-isoleucine from 2-oxobutanoate: step 2/4. Its pathway is amino-acid biosynthesis; L-valine biosynthesis; L-valine from pyruvate: step 2/4. Its function is as follows. Involved in the biosynthesis of branched-chain amino acids (BCAA). Catalyzes an alkyl-migration followed by a ketol-acid reduction of (S)-2-acetolactate (S2AL) to yield (R)-2,3-dihydroxy-isovalerate. In the isomerase reaction, S2AL is rearranged via a Mg-dependent methyl migration to produce 3-hydroxy-3-methyl-2-ketobutyrate (HMKB). In the reductase reaction, this 2-ketoacid undergoes a metal-dependent reduction by NADPH to yield (R)-2,3-dihydroxy-isovalerate. In Bacillus cereus (strain ATCC 14579 / DSM 31 / CCUG 7414 / JCM 2152 / NBRC 15305 / NCIMB 9373 / NCTC 2599 / NRRL B-3711), this protein is Ketol-acid reductoisomerase (NADP(+)) 1.